The chain runs to 134 residues: MSDIPSDLHYTAEHEWIRRSGDDTVRVGITDYAQSALGDVVFVQLPVIGTAVTAGETFGEVESTKSVSDLYAPISGKVSEVNSDLDGTPQLVNSDPYGAGWLLDIQVDSSDVAALESALTTLLDAEAYRGTLTE.

The 83-residue stretch at 24 to 106 (TVRVGITDYA…YGAGWLLDIQ (83 aa)) folds into the Lipoyl-binding domain. The residue at position 65 (Lys-65) is an N6-lipoyllysine.

This sequence belongs to the GcvH family. The glycine cleavage system is composed of four proteins: P, T, L and H. Requires (R)-lipoate as cofactor.

The glycine cleavage system catalyzes the degradation of glycine. The H protein shuttles the methylamine group of glycine from the P protein to the T protein. In Mycobacterium tuberculosis (strain ATCC 25177 / H37Ra), this protein is Glycine cleavage system H protein.